Here is a 160-residue protein sequence, read N- to C-terminus: MPSFDIQSELNKHEVSNAVDQANREVATRFDFKGSGATYKYEGNSITLQAETDFQLKQMIDILQNKFAKRQIDVAHMRLEDPIIQHKSAQQTVMLLEGIDQTAAKKIIKLIKDQKLKVQAAIQGEKVRVTGKKRDDLQSVIGLLKEQEIGLPLQFDNFRD.

The protein belongs to the YajQ family.

Nucleotide-binding protein. This Coxiella burnetii (strain CbuK_Q154) (Coxiella burnetii (strain Q154)) protein is Nucleotide-binding protein CbuK_1936.